The primary structure comprises 415 residues: Camphor 5-monooxygenase (415 aa).

Cysteine 358 is a binding site for heme.

The protein belongs to the cytochrome P450 family. The cofactor is heme.

Its subcellular location is the cytoplasm. It carries out the reaction 2 reduced [2Fe-2S]-[putidaredoxin] + (1R,4R)-camphor + O2 + 2 H(+) = (1R,4R,5R)-5-hydroxycamphor + 2 oxidized [2Fe-2S]-[putidaredoxin] + H2O. It functions in the pathway terpene metabolism; (R)-camphor degradation. Involved in a camphor oxidation system. The chain is Camphor 5-monooxygenase (camC) from Pseudomonas putida (Arthrobacter siderocapsulatus).